Consider the following 516-residue polypeptide: Effector protein hopAB1 (516 aa).

Disordered regions lie at residues 1–93 and 175–259; these read MSGI…AQPA and RALA…DEAL. A compositionally biased stretch (basic and acidic residues) spans 16 to 30; it reads WRADDEPVTERERDS. Positions 31–41 are enriched in polar residues; it reads SSGANLTNSPQ. The span at 81 to 90 shows a compositional bias: pro residues; that stretch reads PVEPRQPPEA. Low complexity-rich tracts occupy residues 183 to 196 and 212 to 224; these read PAPSRPVASSSRSS and QTSSSSQATSSTS.

Belongs to the HopAB family.

The protein localises to the secreted. Functionally, effector protein that plays different roles depending on the species and plant cultivars that interact with the pathogen. Acts as a virulence determinant by enhancing the development of disease symptoms and bacterial growth. Acts as an avirulence factor by eliciting hypersensitive response (HR) and plant resistance. In Pseudomonas syringae pv. syringae (strain B728a), this protein is Effector protein hopAB1 (hopAB1).